The primary structure comprises 102 residues: Colipase-like protein 2 (102 aa).

The first 23 residues, 1–23, serve as a signal peptide directing secretion; the sequence is MAFTQALVTVLALLAGTLPHRHS. 5 disulfide bridges follow: C36/C47, C42/C58, C46/C80, C68/C88, and C82/C99.

The protein belongs to the colipase family.

The protein resides in the secreted. This is Colipase-like protein 2 (Clpsl2) from Mus musculus (Mouse).